Here is a 299-residue protein sequence, read N- to C-terminus: MSGGLSVLGLKDDDVRRFLTAKTHIGTAQLDFQMQQYCFKRRSDGVYLIDLKKTWEKLLLAARAIVAIENPAEVCAISSRPYGQRAVLKFASFTGATPIAGRFTPGTFTNQIQAAFREPRLLVVCDPREDHQPVTEASYVNIPVIAFCNTDACLRYVDVAIPCNNKAQHSIGLMWWMLTREVLRMRGSIIREIPWDTMVDLFFYRDPEEAEKEEQTQVVPERSIKEAPEFPPDQWGVGDTAAVQPEVADWSTAAEIPFQSAPAPAPAPAPATDDWASTGTATVGPTTEWGAATDNSWAS.

The segment at 210 to 299 is disordered; that stretch reads AEKEEQTQVV…GAATDNSWAS (90 aa). A compositionally biased stretch (polar residues) spans 275 to 285; sequence WASTGTATVGP.

The protein belongs to the universal ribosomal protein uS2 family. In terms of assembly, component of the small ribosomal subunit. Mature ribosomes consist of a small (40S) and a large (60S) subunit. The 40S subunit contains about 33 different proteins and 1 molecule of RNA (18S). The 60S subunit contains about 49 different proteins and 3 molecules of RNA (28S, 5.8S and 5S). Interacts with ribosomal protein S21.

It localises to the cytoplasm. Functionally, required for the assembly and/or stability of the 40S ribosomal subunit. Required for the processing of the 20S rRNA-precursor to mature 18S rRNA in a late step of the maturation of 40S ribosomal subunits. The polypeptide is Small ribosomal subunit protein uS2 (Ornithodoros parkeri (Soft tick)).